Consider the following 233-residue polypeptide: Pyridoxal phosphate homeostasis protein (233 aa).

Lys35 is subject to N6-(pyridoxal phosphate)lysine.

Belongs to the pyridoxal phosphate-binding protein YggS/PROSC family.

In terms of biological role, pyridoxal 5'-phosphate (PLP)-binding protein, which is involved in PLP homeostasis. The protein is Pyridoxal phosphate homeostasis protein of Pasteurella multocida (strain Pm70).